The following is a 144-amino-acid chain: Large ribosomal subunit protein uL16 (144 aa).

The segment covering Met-1 to Arg-16 has biased composition (basic residues). Residues Met-1 to Gly-25 form a disordered region.

It belongs to the universal ribosomal protein uL16 family. In terms of assembly, part of the 50S ribosomal subunit.

Binds 23S rRNA and is also seen to make contacts with the A and possibly P site tRNAs. The protein is Large ribosomal subunit protein uL16 of Desulforamulus reducens (strain ATCC BAA-1160 / DSM 100696 / MI-1) (Desulfotomaculum reducens).